We begin with the raw amino-acid sequence, 440 residues long: Transposon Ty1-PR3 Gag polyprotein (440 aa).

Polar residues-rich tracts occupy residues 1 to 23, 48 to 60, and 127 to 152; these read MESQ…SVTS, TKAN…TPAS, and QSQF…GNTF. Disordered stretches follow at residues 1–93, 126–173, and 352–440; these read MESQ…MMTQ, PQSQ…RPPP, and GSRN…PGTY. Residues 153–165 are compositionally biased toward low complexity; it reads TDSSSADSDMTST. Positions 299–401 are RNA-binding; it reads NNGIHINNKV…NSKSKTARAH (103 aa). Residues 402-418 show a composition bias toward low complexity; that stretch reads NVSTSNNSPSTDNDSIS. Position 416 is a phosphoserine (serine 416). A compositionally biased stretch (polar residues) spans 419-428; that stretch reads KSTTEPIQLN. Basic and acidic residues predominate over residues 429–440; the sequence is NKHDLHLRPGTY.

In terms of assembly, homotrimer.

The protein localises to the cytoplasm. Its function is as follows. Capsid protein (CA) is the structural component of the virus-like particle (VLP), forming the shell that encapsulates the retrotransposons dimeric RNA genome. The particles are assembled from trimer-clustered units and there are holes in the capsid shells that allow for the diffusion of macromolecules. CA also has nucleocapsid-like chaperone activity, promoting primer tRNA(i)-Met annealing to the multipartite primer-binding site (PBS), dimerization of Ty1 RNA and initiation of reverse transcription. In Saccharomyces cerevisiae (strain ATCC 204508 / S288c) (Baker's yeast), this protein is Transposon Ty1-PR3 Gag polyprotein (TY1A-PR3).